The primary structure comprises 363 residues: Adenosine 3'-phospho 5'-phosphosulfate transporter 2 (363 aa).

Transmembrane regions (helical) follow at residues 39–59, 63–83, 106–126, 131–151, 157–177, 187–206, 231–251, 257–277, 281–301, and 310–330; these read WLQF…YGYM, IFKL…QFVI, IYGV…ASVG, PTQV…GILI, GWID…FTLA, SRGY…IGNI, VFIF…PFFL, TFGY…VVLT, VFGA…TIIL, and FTIE…LNLY.

It belongs to the nucleotide-sugar transporter family. SLC35B subfamily.

The protein localises to the golgi apparatus membrane. Functionally, mediates the transport of adenosine 3'-phospho 5'-phosphosulfate (PAPS), from cytosol into Golgi. PAPS is a universal sulfuryl donor for sulfation events that take place in the Golgi. The sequence is that of Adenosine 3'-phospho 5'-phosphosulfate transporter 2 (pst-2) from Caenorhabditis briggsae.